Reading from the N-terminus, the 128-residue chain is Large ribosomal subunit protein uL22 (128 aa).

It belongs to the universal ribosomal protein uL22 family. In terms of assembly, part of the 50S ribosomal subunit.

In terms of biological role, this protein binds specifically to 23S rRNA; its binding is stimulated by other ribosomal proteins, e.g. L4, L17, and L20. It is important during the early stages of 50S assembly. It makes multiple contacts with different domains of the 23S rRNA in the assembled 50S subunit and ribosome. Its function is as follows. The globular domain of the protein is located near the polypeptide exit tunnel on the outside of the subunit, while an extended beta-hairpin is found that lines the wall of the exit tunnel in the center of the 70S ribosome. The polypeptide is Large ribosomal subunit protein uL22 (Rhodopseudomonas palustris (strain HaA2)).